A 205-amino-acid chain; its full sequence is Polyamine-modulated factor 1 (205 aa).

The interval 1–28 is disordered; sequence MAEASSVNVGSGCAEKGPEELSQEPARP. Positions 140–190 form a coiled coil; the sequence is YLLQQRDALQRRVQRQEAENRQLADAVLAGRRQLEELQLQAQARQQAWQAL.

As to quaternary structure, component of the MIS12 complex composed of MIS12, DSN1, NSL1 and PMF1. Interacts with COPS7A. Interacts via its coiled-coil domain with the leucine-zipper domain of NFE2L2. The interaction with NFE2L2 is required for the transcriptional regulation of SSAT.

It localises to the nucleus. Its subcellular location is the chromosome. It is found in the centromere. The protein localises to the kinetochore. Its function is as follows. Part of the MIS12 complex which is required for normal chromosome alignment and segregation and kinetochore formation during mitosis. May act as a cotranscription partner of NFE2L2 involved in regulation of polyamine-induced transcription of SSAT. This is Polyamine-modulated factor 1 (PMF1) from Bos taurus (Bovine).